An 82-amino-acid chain; its full sequence is Escargot/snail protein homolog (82 aa).

4 consecutive C2H2-type zinc fingers follow at residues 1-5 (HQQFH), 18-40 (FSCK…IRTH), 44-66 (CKCP…IRTH), and 72-82 (FSCQHCQSAFV).

This sequence belongs to the snail C2H2-type zinc-finger protein family.

It is found in the nucleus. The chain is Escargot/snail protein homolog from Calliphora vicina (Blue blowfly).